The sequence spans 143 residues: Alpha-amylase/trypsin inhibitor CM16 (143 aa).

A signal peptide spans 1 to 24; that stretch reads MASKSNCVLLLAAVLVSIFAAVAA.

It belongs to the protease inhibitor I6 (cereal trypsin/alpha-amylase inhibitor) family. In terms of assembly, subunit of the tetrameric inhibitor. Five disulfide bonds, which are essential for the inhibitor activity, are probably present. As to expression, developing endosperm.

It localises to the secreted. In terms of biological role, alpha-amylase/trypsin inhibitor. It could be involved in insect defense mechanisms. This Triticum aestivum (Wheat) protein is Alpha-amylase/trypsin inhibitor CM16.